The sequence spans 189 residues: Segregation and condensation protein B (189 aa).

This sequence belongs to the ScpB family. As to quaternary structure, homodimer. Homodimerization may be required to stabilize the binding of ScpA to the Smc head domains. Component of a cohesin-like complex composed of ScpA, ScpB and the Smc homodimer, in which ScpA and ScpB bind to the head domain of Smc. The presence of the three proteins is required for the association of the complex with DNA.

It localises to the cytoplasm. Participates in chromosomal partition during cell division. May act via the formation of a condensin-like complex containing Smc and ScpA that pull DNA away from mid-cell into both cell halves. This Streptococcus sanguinis (strain SK36) protein is Segregation and condensation protein B.